The sequence spans 296 residues: Protoheme IX farnesyltransferase (296 aa).

9 helical membrane-spanning segments follow: residues I13–I33, Y35–F55, V84–A104, L107–M127, V132–A152, L162–F182, I208–A228, G229–R249, and F264–V284.

This sequence belongs to the UbiA prenyltransferase family. Protoheme IX farnesyltransferase subfamily.

Its subcellular location is the cell inner membrane. It catalyses the reaction heme b + (2E,6E)-farnesyl diphosphate + H2O = Fe(II)-heme o + diphosphate. It participates in porphyrin-containing compound metabolism; heme O biosynthesis; heme O from protoheme: step 1/1. Its function is as follows. Converts heme B (protoheme IX) to heme O by substitution of the vinyl group on carbon 2 of heme B porphyrin ring with a hydroxyethyl farnesyl side group. The protein is Protoheme IX farnesyltransferase of Edwardsiella ictaluri (strain 93-146).